The chain runs to 730 residues: Kinesin-like protein KIF2C (730 aa).

The globular stretch occupies residues 1–256; sequence MERLVATRLV…MDCHRISMAD (256 aa). A disordered region spans residues 79–98; it reads NMPPQRNVSSQNHKRKTISK. Positions 211–242 are negative regulator of microtubule-binding; that stretch reads EQRAQNYERRMKRAQDYDTSVPNWEFGKMIKE. One can recognise a Kinesin motor domain in the interval 262–592; the sequence is RICVCVRKRP…LRYADRVKEL (331 aa). Residues arginine 268 and 352–359 each bind ATP; that span reads GQTGSGKT. The stretch at 599 to 730 forms a coiled coil; it reads TNDDNLQMED…QISKKKRSNK (132 aa).

Belongs to the TRAFAC class myosin-kinesin ATPase superfamily. Kinesin family. MCAK/KIF2 subfamily.

Its subcellular location is the cytoplasm. The protein resides in the cytoskeleton. It is found in the nucleus. It localises to the chromosome. The protein localises to the centromere. Its subcellular location is the kinetochore. Its function is as follows. Promotes ATP-dependent removal of tubulin dimers from microtubules. Regulates the turnover of microtubules at the kinetochore and functions in chromosome segregation during mitosis. May play a role in chromosome congression and may be required for the lateral to end-on conversion of the chromosome-microtubule attachment. This is Kinesin-like protein KIF2C (kif2c) from Xenopus laevis (African clawed frog).